A 200-amino-acid polypeptide reads, in one-letter code: ATP-dependent Clp protease proteolytic subunit (200 aa).

Ser99 (nucleophile) is an active-site residue. His124 is an active-site residue.

It belongs to the peptidase S14 family. Fourteen ClpP subunits assemble into 2 heptameric rings which stack back to back to give a disk-like structure with a central cavity, resembling the structure of eukaryotic proteasomes.

The protein localises to the cytoplasm. The enzyme catalyses Hydrolysis of proteins to small peptides in the presence of ATP and magnesium. alpha-casein is the usual test substrate. In the absence of ATP, only oligopeptides shorter than five residues are hydrolyzed (such as succinyl-Leu-Tyr-|-NHMec, and Leu-Tyr-Leu-|-Tyr-Trp, in which cleavage of the -Tyr-|-Leu- and -Tyr-|-Trp bonds also occurs).. In terms of biological role, cleaves peptides in various proteins in a process that requires ATP hydrolysis. Has a chymotrypsin-like activity. Plays a major role in the degradation of misfolded proteins. This is ATP-dependent Clp protease proteolytic subunit from Syntrophomonas wolfei subsp. wolfei (strain DSM 2245B / Goettingen).